The following is a 254-amino-acid chain: tRNA (guanine-N(1)-)-methyltransferase (254 aa).

Residues glycine 112 and 131–136 (IGDYIL) each bind S-adenosyl-L-methionine.

The protein belongs to the RNA methyltransferase TrmD family. As to quaternary structure, homodimer.

Its subcellular location is the cytoplasm. It carries out the reaction guanosine(37) in tRNA + S-adenosyl-L-methionine = N(1)-methylguanosine(37) in tRNA + S-adenosyl-L-homocysteine + H(+). Its function is as follows. Specifically methylates guanosine-37 in various tRNAs. This Sulfurihydrogenibium sp. (strain YO3AOP1) protein is tRNA (guanine-N(1)-)-methyltransferase.